We begin with the raw amino-acid sequence, 248 residues long: 5'-nucleotidase SurE (248 aa).

4 residues coordinate a divalent metal cation: Asp8, Asp9, Ser39, and Asn91.

It belongs to the SurE nucleotidase family. A divalent metal cation serves as cofactor.

It localises to the cytoplasm. It catalyses the reaction a ribonucleoside 5'-phosphate + H2O = a ribonucleoside + phosphate. Its function is as follows. Nucleotidase that shows phosphatase activity on nucleoside 5'-monophosphates. The chain is 5'-nucleotidase SurE from Neisseria meningitidis serogroup B (strain ATCC BAA-335 / MC58).